Here is a 379-residue protein sequence, read N- to C-terminus: Anhydro-N-acetylmuramic acid kinase (379 aa).

Residue 9-16 (GTSVDGID) participates in ATP binding.

The protein belongs to the anhydro-N-acetylmuramic acid kinase family.

The enzyme catalyses 1,6-anhydro-N-acetyl-beta-muramate + ATP + H2O = N-acetyl-D-muramate 6-phosphate + ADP + H(+). Its pathway is amino-sugar metabolism; 1,6-anhydro-N-acetylmuramate degradation. The protein operates within cell wall biogenesis; peptidoglycan recycling. Its function is as follows. Catalyzes the specific phosphorylation of 1,6-anhydro-N-acetylmuramic acid (anhMurNAc) with the simultaneous cleavage of the 1,6-anhydro ring, generating MurNAc-6-P. Is required for the utilization of anhMurNAc either imported from the medium or derived from its own cell wall murein, and thus plays a role in cell wall recycling. The chain is Anhydro-N-acetylmuramic acid kinase from Acaryochloris marina (strain MBIC 11017).